Consider the following 809-residue polypeptide: Ferric-pyoverdine BN7/BN8 receptor (809 aa).

The N-terminal stretch at 1 to 45 (MNHTARKRQGWQRSVSQKLAGAVVQGIACMGASAPLLLMPAWATA) is a signal peptide. The TBDR plug domain occupies 166–273 (TPRETPQSLT…PSATINLIRK (108 aa)). In terms of domain architecture, TBDR beta-barrel spans 278-809 (EAQASITGEA…NVMTSFKYSF (532 aa)). The short motif at 792–809 (YGVYGTPRNVMTSFKYSF) is the TonB C-terminal box element.

Belongs to the TonB-dependent receptor family.

It localises to the cell outer membrane. Its function is as follows. Specific receptor for the siderophores ferric pyoverdines (pseudobactins) BN8 and BN7, iron chelating molecules that allow the organism to extract iron from the environment, especially under iron-restricted conditions. The sequence is that of Ferric-pyoverdine BN7/BN8 receptor (pupB) from Pseudomonas putida (Arthrobacter siderocapsulatus).